The primary structure comprises 249 residues: tRNA(Phe) (4-demethylwyosine(37)-C(7)) aminocarboxypropyltransferase (249 aa).

S-adenosyl-L-methionine contacts are provided by residues S80, R87, E127, and 154–155; that span reads DN.

This sequence belongs to the class I-like SAM-binding methyltransferase superfamily. TRM5/TYW2 family.

The protein resides in the cytoplasm. The enzyme catalyses 4-demethylwyosine(37) in tRNA(Phe) + S-adenosyl-L-methionine = 4-demethyl-7-[(3S)-3-amino-3-carboxypropyl]wyosine(37) in tRNA(Phe) + S-methyl-5'-thioadenosine + H(+). Its function is as follows. S-adenosyl-L-methionine-dependent transferase that acts as a component of the wyosine derivatives biosynthesis pathway. Catalyzes the transfer of the alpha-amino-alpha-carboxypropyl (acp) group from S-adenosyl-L-methionine to 4-demethylwyosine (imG-14), forming 7-aminocarboxypropyl-demethylwyosine (wybutosine-86) at position 37 of tRNA(Phe). This Methanocaldococcus jannaschii (strain ATCC 43067 / DSM 2661 / JAL-1 / JCM 10045 / NBRC 100440) (Methanococcus jannaschii) protein is tRNA(Phe) (4-demethylwyosine(37)-C(7)) aminocarboxypropyltransferase.